Consider the following 186-residue polypeptide: Ribosome-recycling factor (186 aa).

It belongs to the RRF family.

It is found in the cytoplasm. Responsible for the release of ribosomes from messenger RNA at the termination of protein biosynthesis. May increase the efficiency of translation by recycling ribosomes from one round of translation to another. The chain is Ribosome-recycling factor from Rhodopseudomonas palustris (strain ATCC BAA-98 / CGA009).